The primary structure comprises 737 residues: ATP-dependent RNA helicase DDX50 (737 aa).

The disordered stretch occupies residues 1–131; it reads MPGKLLWGDI…SDNKLEETLT (131 aa). A compositionally biased stretch (acidic residues) spans 11–20; that stretch reads MELEAPLEES. Basic and acidic residues-rich tracts occupy residues 38–51, 67–87, and 117–131; these read HYDS…RENG, KEKL…EFSK, and STHK…ETLT. Phosphoserine is present on residues Ser41, Ser82, Ser86, Ser121, and Ser122. A Glycyl lysine isopeptide (Lys-Gly) (interchain with G-Cter in SUMO2) cross-link involves residue Lys125. A Q motif motif is present at residues 137–165; that stretch reads GAFSNFPISEETIKLLKGRGVTYLFPIQV. The region spanning 168-347 is the Helicase ATP-binding domain; the sequence is FGPVYEGKDL…KKYMKSRYEQ (180 aa). 181 to 188 is an ATP binding site; the sequence is ARTGTGKT. Residue Thr247 is modified to Phosphothreonine. Residues 290–293 carry the DEVD box motif; sequence DEVD. A Helicase C-terminal domain is found at 380–524; sequence DVLQVYSGSE…GVPSTMDLVK (145 aa). Phosphoserine is present on Ser518. Residues 668-737 form a disordered region; the sequence is YDGNTSSNSR…RSGGHKRSFD (70 aa). Over residues 673–687 the composition is skewed to low complexity; sequence SSNSRQRSGWSSGRS. Residues 691–701 are compositionally biased toward gly residues; sequence GRSGGRSGGRS. Positions 702–712 are enriched in low complexity; sequence GRQSRQGSRSG. The segment covering 720–737 has biased composition (basic residues); it reads RSGNRNRSRSGGHKRSFD.

Belongs to the DEAD box helicase family. DDX21/DDX50 subfamily. Interacts with C1QBP. Interacts with the ubiquitin ligase CTLH complex through GID4. Interacts with TICAM1. In terms of tissue distribution, highest expression in skeletal muscle, liver, heart, placenta, and kidney.

It is found in the nucleus. The protein localises to the nucleolus. The protein resides in the cytoplasm. It carries out the reaction ATP + H2O = ADP + phosphate + H(+). In terms of biological role, ATP-dependent RNA helicase that may play a role in various aspects of RNA metabolism including pre-mRNA splicing or ribosomal RNA production. Also acts as a viral restriction factor and promotes the activation of the NF-kappa-B and IRF3 signaling pathways following its stimulation with viral RNA or infection with RNA and DNA viruses. For instance, decreases vaccinia virus, herpes simplex virus, Zika virus or dengue virus replication during the early stage of infection. Mechanistically, acts via the adapter TICAM1 and independently of the DDX1-DDX21-DHX36 helicase complex to induce the production of interferon-beta. In Homo sapiens (Human), this protein is ATP-dependent RNA helicase DDX50 (DDX50).